The sequence spans 266 residues: uncharacterized protein (266 aa).

Residues 1-22 (MGYFKRVVLYIIVMVVSVFIIG) form the signal peptide. The N-palmitoyl cysteine moiety is linked to residue C23. C23 carries S-diacylglycerol cysteine lipidation.

This sequence belongs to the staphylococcal tandem lipoprotein family.

It localises to the cell membrane. This is an uncharacterized protein from Staphylococcus aureus (strain N315).